A 129-amino-acid chain; its full sequence is Large ribosomal subunit protein bL17 (129 aa).

This sequence belongs to the bacterial ribosomal protein bL17 family. Part of the 50S ribosomal subunit. Contacts protein L32.

The protein is Large ribosomal subunit protein bL17 of Hahella chejuensis (strain KCTC 2396).